Here is a 434-residue protein sequence, read N- to C-terminus: 3-phosphoshikimate 1-carboxyvinyltransferase (434 aa).

Residues Lys-22, Ser-23, and Arg-27 each coordinate 3-phosphoshikimate. Residue Lys-22 participates in phosphoenolpyruvate binding. Gly-94 and Arg-122 together coordinate phosphoenolpyruvate. Ser-169, Ser-170, Gln-171, Ser-199, Asp-320, and Lys-347 together coordinate 3-phosphoshikimate. A phosphoenolpyruvate-binding site is contributed by Gln-171. Asp-320 acts as the Proton acceptor in catalysis. Residues Arg-351, Arg-395, and Lys-420 each contribute to the phosphoenolpyruvate site.

It belongs to the EPSP synthase family. As to quaternary structure, monomer.

Its subcellular location is the cytoplasm. The catalysed reaction is 3-phosphoshikimate + phosphoenolpyruvate = 5-O-(1-carboxyvinyl)-3-phosphoshikimate + phosphate. The protein operates within metabolic intermediate biosynthesis; chorismate biosynthesis; chorismate from D-erythrose 4-phosphate and phosphoenolpyruvate: step 6/7. Functionally, catalyzes the transfer of the enolpyruvyl moiety of phosphoenolpyruvate (PEP) to the 5-hydroxyl of shikimate-3-phosphate (S3P) to produce enolpyruvyl shikimate-3-phosphate and inorganic phosphate. The sequence is that of 3-phosphoshikimate 1-carboxyvinyltransferase from Ralstonia pickettii (strain 12J).